Consider the following 577-residue polypeptide: Arginine--tRNA ligase (577 aa).

The 'HIGH' region signature appears at 123-133 (PNVAKEMHVGH).

The protein belongs to the class-I aminoacyl-tRNA synthetase family. In terms of assembly, monomer.

The protein localises to the cytoplasm. The catalysed reaction is tRNA(Arg) + L-arginine + ATP = L-arginyl-tRNA(Arg) + AMP + diphosphate. This is Arginine--tRNA ligase from Cronobacter sakazakii (strain ATCC BAA-894) (Enterobacter sakazakii).